The primary structure comprises 592 residues: ATP-dependent lipid A-core flippase (592 aa).

The next 6 helical transmembrane spans lie at 31–51 (LSSF…EGII), 76–96 (AMLV…TYFL), 134–154 (AVIF…ITLV), 161–181 (LALL…VAVI), 261–281 (VTQF…MVQA), and 288–308 (VGGF…LKHL). An ABC transmembrane type-1 domain is found at 35–317 (ILAMVAMGVV…LTDVNQPMQR (283 aa)). An ABC transporter domain is found at 349–587 (LRFEHVTFRY…DGLYAGLHRI (239 aa)). 383–390 (GPSGSGKT) provides a ligand contact to ATP.

It belongs to the ABC transporter superfamily. Lipid exporter (TC 3.A.1.106) family. As to quaternary structure, homodimer.

The protein localises to the cell inner membrane. The catalysed reaction is ATP + H2O + lipid A-core oligosaccharideSide 1 = ADP + phosphate + lipid A-core oligosaccharideSide 2.. Involved in lipopolysaccharide (LPS) biosynthesis. Translocates lipid A-core from the inner to the outer leaflet of the inner membrane. Transmembrane domains (TMD) form a pore in the inner membrane and the ATP-binding domain (NBD) is responsible for energy generation. The polypeptide is ATP-dependent lipid A-core flippase (Ralstonia nicotianae (strain ATCC BAA-1114 / GMI1000) (Ralstonia solanacearum)).